The following is a 136-amino-acid chain: NADPH-dependent 7-cyano-7-deazaguanine reductase (136 aa).

C50 (thioimide intermediate) is an active-site residue. D57 serves as the catalytic Proton donor. Substrate-binding positions include 72–74 (YEL) and 91–92 (HE).

It belongs to the GTP cyclohydrolase I family. QueF type 1 subfamily.

It is found in the cytoplasm. The catalysed reaction is 7-aminomethyl-7-carbaguanine + 2 NADP(+) = 7-cyano-7-deazaguanine + 2 NADPH + 3 H(+). It participates in tRNA modification; tRNA-queuosine biosynthesis. Catalyzes the NADPH-dependent reduction of 7-cyano-7-deazaguanine (preQ0) to 7-aminomethyl-7-deazaguanine (preQ1). The protein is NADPH-dependent 7-cyano-7-deazaguanine reductase of Prochlorococcus marinus (strain MIT 9301).